The chain runs to 712 residues: MQMKLKSILLGAALLLGASGVAKADKGMWLLNELNQENLDRMRELGFTLPLDSLYSFDKPSIANAVVIFGGGCTGITVSDQGLIFTNHHCGYGAIQSQSTVDHDYLRDGFVSRTMGEELPIPGLSVKYLRKIVKVTDKVEGQLKGITDEMERLRKAQEVCQELAKKENADENQLCIVEPFYSNNEYFLIVYDVFKDVRMVFAPPSSVGKFGGDTDNWMWPRHTGDFSVFRVYAGADNRPAEYSKDNKPYKPVYFAAVSMQGYKADDYAMTIGFPGSTDRYLTSWGVEDRIENENNPRIEVRGIKQGIWKEAMSADQATRIKYASKYAQSANYWKNSIGMNRGLARLDVIGRKRAEERAFADWIRKNGKSAVYGDVLSSLEKAYKEGAKANREMTYLSETLFGGTEVVRFAQFANALATNPDAHAGILKSLDDKYKDYLPSLDRKVLPAMLDIVRRRIPADKLPDIFKNVIDKKFKGDTKKYADFVFDKSVVPYSDKFHAMLKSMDKEKFAKAIEKDPAVELSKSVIAAARAIQADAMANAYAIEKGKRLFFAGLREMYPGRALPSDANFTMRMSYGSIKGYEPQDGAWYNYHTTGKGVLEKQDPKSDEFAVQENILDLFRTKNYGRYAENGQLHIAFLSNNDITGGNSGSPVFDKNGRLIGLAFDGNWEAMSGDIEFEPDLQRTISVDIRYVLFMIDKWGQCPRLIQELKLI.

Residues 1–23 (MQMKLKSILLGAALLLGASGVAK) form the signal peptide. Histidine 89 (charge relay system) is an active-site residue. The stretch at 136 to 173 (TDKVEGQLKGITDEMERLRKAQEVCQELAKKENADENQ) forms a coiled coil. Catalysis depends on charge relay system residues aspartate 225 and serine 648.

This sequence belongs to the peptidase S46 family.

It localises to the cell outer membrane. With respect to regulation, is inhibited in vitro by typical serine protease inhibitors like diisopropyl fluorophosphate, Pefablock, and 3,4-dichloroisocoumarin, but not by typical cysteine class inhibitors such as E-64 or iododoacetic acid. Functionally, catalyzes the removal of dipeptides from the N-terminus of oligopeptides. Shows a broad specificity for both aliphatic and aromatic residues in the P1 position, with glycine or proline being not acceptable in this position. Most potently cleaves the synthetic substrate Met-Leu-methylcoumaryl-7-amide (Met-Leu-MCA), Leu-Arg-MCA and Lys-Ala-MCA to a lesser extent. Is likely involved in amino acid metabolism and bacterial growth of asaccharolytic P.gingivalis, that utilizes amino acids from extracellular proteinaceous nutrients as energy and carbon sources. In Porphyromonas gingivalis (strain ATCC 33277 / DSM 20709 / CIP 103683 / JCM 12257 / NCTC 11834 / 2561), this protein is Dipeptidyl-peptidase 7.